The chain runs to 873 residues: Polyribonucleotide nucleotidyltransferase (873 aa).

2 residues coordinate Mg(2+): Asp-521 and Asp-527. Positions 587–646 (PRIITTTVPVDKIGEVIGPKGKMINQIQEDTGAEIAIEDDGTVYISSEGGEAAEKAKQII) constitute a KH domain. The 73-residue stretch at 658 to 730 (GETYKGTVVK…DRGKISLAIP (73 aa)) folds into the S1 motif domain. The segment at 727–873 (LAIPGFENQE…VRRDFDPFDD (147 aa)) is disordered. Residues 742–857 (RRSDDRPRRD…EYREGREVRH (116 aa)) show a composition bias toward basic and acidic residues.

This sequence belongs to the polyribonucleotide nucleotidyltransferase family. It depends on Mg(2+) as a cofactor.

It localises to the cytoplasm. The catalysed reaction is RNA(n+1) + phosphate = RNA(n) + a ribonucleoside 5'-diphosphate. Its function is as follows. Involved in mRNA degradation. Catalyzes the phosphorolysis of single-stranded polyribonucleotides processively in the 3'- to 5'-direction. The protein is Polyribonucleotide nucleotidyltransferase of Bifidobacterium animalis subsp. lactis (strain AD011).